The chain runs to 350 residues: Paired box protein Pax-4 (350 aa).

The segment at residues 5–131 is a DNA-binding region (paired); it reads GISSMNQLGG…SSINRVLRAL (127 aa). Residues 8 to 64 form a PAI subdomain region; it reads SMNQLGGLFVNGRPLPLDTRQQIVRLAVSGMRPCDISRILKVSNGCVSKILGRYYRT. The interval 83–131 is RED subdomain; that stretch reads PVVARIAQLKGECPALFAWEIQRQLCAEGLCTQDKTPSVSSINRVLRAL. The tract at residues 153–172 is disordered; that stretch reads LTPHSGSETPRGTHPGTGHR. The homeobox DNA-binding region spans 170 to 229; the sequence is GHRNRTIFSPSQAEALEKEFQRGQYPDSVARGKLATATSLPEDTVRVWFSNRRAKWRRQE. The segment at 278 to 350 is transcription repression; that stretch reads CYQLCWATAP…ATPTHFSHWP (73 aa).

The protein belongs to the paired homeobox family.

The protein localises to the nucleus. Its function is as follows. Plays an important role in the differentiation and development of pancreatic islet beta cells. Transcriptional repressor that binds to a common element in the glucagon, insulin and somatostatin promoters. Competes with PAX6 for this same promoter binding site. Isoform 2 appears to be a dominant negative form antagonizing PAX4 transcriptional activity. The protein is Paired box protein Pax-4 (PAX4) of Homo sapiens (Human).